The primary structure comprises 526 residues: uncharacterized protein (526 aa).

2 WD repeats span residues 210 to 248 (SMEQYINSIAISPNKKYIALATTCGLIIYNLIDKTHHDT) and 452 to 491 (SHNSCVTSIAISSNNKMILTAGLDGLLKLWNSKTLNLIDS).

This is an uncharacterized protein from Acanthamoeba polyphaga mimivirus (APMV).